We begin with the raw amino-acid sequence, 692 residues long: Elongation factor G (692 aa).

One can recognise a tr-type G domain in the interval 8 to 282 (AKTRNIGIMA…AVIAYLPSPL (275 aa)). GTP is bound by residues 17–24 (AHVDAGKT), 81–85 (DTPGH), and 135–138 (NKMD).

The protein belongs to the TRAFAC class translation factor GTPase superfamily. Classic translation factor GTPase family. EF-G/EF-2 subfamily.

It localises to the cytoplasm. Its function is as follows. Catalyzes the GTP-dependent ribosomal translocation step during translation elongation. During this step, the ribosome changes from the pre-translocational (PRE) to the post-translocational (POST) state as the newly formed A-site-bound peptidyl-tRNA and P-site-bound deacylated tRNA move to the P and E sites, respectively. Catalyzes the coordinated movement of the two tRNA molecules, the mRNA and conformational changes in the ribosome. In Streptococcus equi subsp. equi (strain 4047), this protein is Elongation factor G.